The sequence spans 737 residues: Polyribonucleotide nucleotidyltransferase (737 aa).

Mg(2+) contacts are provided by aspartate 489 and aspartate 495. Residues 556–615 (PKIDTIKIDVDKIKIVIGKGGETIDKIIAETGVKIDIDEEGNVSIYSSDQDAINRAKEII) enclose the KH domain. An S1 motif domain is found at 625 to 693 (DEVYRAKVVR…EKGRVDASMK (69 aa)). A disordered region spans residues 691-737 (SMKALLPRPPKPERDEKGEKSERPYRPRHHKDHKPKKEITETPKDSE). Basic and acidic residues-rich tracts occupy residues 700 to 715 (PKPERDEKGEKSERPY) and 725 to 737 (PKKEITETPKDSE).

This sequence belongs to the polyribonucleotide nucleotidyltransferase family. The cofactor is Mg(2+).

The protein localises to the cytoplasm. It carries out the reaction RNA(n+1) + phosphate = RNA(n) + a ribonucleoside 5'-diphosphate. Involved in mRNA degradation. Catalyzes the phosphorolysis of single-stranded polyribonucleotides processively in the 3'- to 5'-direction. The polypeptide is Polyribonucleotide nucleotidyltransferase (Streptococcus pneumoniae (strain Hungary19A-6)).